A 1750-amino-acid chain; its full sequence is MIVNNMYNLCPKIINSVIVVGLYYGFMTALSIKPSHIFLIRALLLEKETNKNKGVAEETKKKVAATTGFIMGQFIRLISIYYGPLYVALGRPHTITILALPYLLIHLFWNTDKSFFAYDSNKLNSIRNLEIYCVFLNHFALQLLNSCILPNSTLARLVSIYMFRCNNKILFLTSSFFAWFIGQLFILNCFELVLVWIRKKNSIRSTFRNYLLRNSIFVIFLNCIFGSLLFLLSIQCLGRIPSPIPTQKLSEVSKIEQRERERLQKEEERGVEKKEQSTEEDPSLFLEEKAGWDKEKEPDYKFPDSELEILQKKKIKNQEFEKHLAALLFDYKRWTRPFRYIKNNHLEQALRNEMSQYFFDTYQSDGKNRLSFTHPISLSAFLKMIKPKIPLLLVEKNTFNSNSLDNGWVYRNKKQMNYLRIDFLNRVKNLDKAKAVALPRIEFETTRTQLCIHNDENKQEYLPENFDPLLNGPYRGRIKKGLLPINDTLSEHLRETVMLNRLHALVLLNTNSKNSNQKMSTFGKKPLEICGFSTFNLNLMDSELKTEVLVNPIETHDLNFLKKYSTIEEISKKVPRWSYKLITELEQISYYKNPPDDHDIRSRKGISVVIFDPNKEATTTNSKTNTTKDTNLETKKESESDEDKLVVIRYPQQSDFRQGLIKDSMRNQRRKIIIWELFNANVHSPLFFDRLTIVFSFPRLKQLFINLSARHVFGISKSTDKKRGKTKKEEKRENKQREQKERLEIGEAWDVFPVAQIIRGFLLLNQTFIRKKIILPSLIIGKNIGRILLFQIPEWSEDLRELNRETHIKCTYNGIPLSEKEFPENWLTEGIQIKILFPFCLKPWHPYKPQTSHYDFCFLTVWGRETEQPFGHPRKTPSFFEPVLQELDKKIVNINIKARIFSKVKINLFKRFSKEKDFQISNQIINESFQQIEEIPGCTNSSLIEKMQNMAHRTSTIKKEIERVTEEKKRVTLERYICFYKRSYRLALAKNIFKKVKVKVTKNRLICKFFFFKKLFNQRIYNNIFLETIYICRITTQLFLESTKKLIYKYIFNYERNKKRIDINKETKNKFNLISKLKTYNHCKKNSYLSCDLSNLSQAYVFYKIPQTGVLNVCKLISALQQNGIPSFIKTQIKDSFHTQGICKYELIQKKLQWPKTNQWKNWLRVNSEYDLSHILWFSLISQKQKWRNRVEQYHRSKEKYLNKRNSRGNYRLSDSKKQNVPKPVSDNYKKCYQYDLLSYKSINYAKKSASVISRSTPKGQAISYNDNMLQNIPGKIKRLYITYIPYIGKTLDRKYLIWKNIHFYLRKKVDIESWVAVNTSSDKDSTIGTYNYQLIDQIDKKEKELFSIPIRQNTEINRPNSTNSLVDWMGMNEQILNRPITNLELWFFPEFVWFFNVYKTKPWIIPSKILILNSNLSETDSKQKSETDSKQKSETDSKQKSETDSKQKSETDSKQKSETDSKQKSETDSKQKSETDSKQKSETDSKQKNNAEIQKDLDEDSTKSDKKNKKEKETELELFAKKYFLFQLRGDPTFKKSFFKNIQIYCLLLRLTNRKKMTLSCIQRRKFNLRIMPTMTNLFNVPEFLKMTGLVMDPLPLLIKTNGKFLLYQIVGISLVHKSKHQTNQTYRKRIIIRAGMTNLENNHLDVLVLENILSSRCRREFRTLICLNYKNWNGVNTNSIFCSKNCNQFWEERKPQYNEKRELIQKFLWPNYRLEDLACVNRYSFDITNGSRFSLLRFHMYLPWKIHG.

A run of 6 helical transmembrane segments spans residues 12–32, 69–89, 97–117, 129–149, 177–197, and 216–236; these read KIIN…ALSI, FIMG…YVAL, ILAL…SFFA, LEIY…SCIL, FAWF…LVWI, and IFVI…SIQC. The segment covering 260 to 277 has biased composition (basic and acidic residues); sequence RERLQKEEERGVEKKEQS. 5 disordered regions span residues 260 to 282, 617 to 638, 718 to 738, 1205 to 1225, and 1419 to 1512; these read RERL…EEDP, ATTT…KKES, STDK…KQRE, RNSR…PKPV, and ETDS…NKKE. A compositionally biased stretch (low complexity) spans 617 to 629; that stretch reads ATTTNSKTNTTKD. A compositionally biased stretch (basic and acidic residues) spans 727–738; the sequence is KKEEKRENKQRE. Residues 1420–1512 show a composition bias toward basic and acidic residues; that stretch reads TDSKQKSETD…TKSDKKNKKE (93 aa).

This sequence belongs to the TIC214 family. As to quaternary structure, part of the Tic complex.

The protein resides in the plastid. It localises to the chloroplast inner membrane. Its function is as follows. Involved in protein precursor import into chloroplasts. May be part of an intermediate translocation complex acting as a protein-conducting channel at the inner envelope. The polypeptide is Protein TIC 214 (Cuscuta reflexa (Southern Asian dodder)).